A 1851-amino-acid chain; its full sequence is MFKCIPIFKGCNRQVEFVDKRHCSLPQVPEEILRYSRTLEELFLDANHIRDLPKNFFRLHRLRKLGLSDNEIGRLPPDIQNFENLVELDVSRNDIPDIPDDIKHLQSLQVADFSSNPIPKLPSGFSQLKNLTVLGLNDMSLTTLPADFGSLTQLESLELRENLLKHLPETISQLTKLKRLDLGDNEIEDLPPYLGYLPGLHELWLDHNQLQRLPPELGLLTKLTYLDVSENRLEELPNEISGLVSLTDLDLAQNLLEALPDGIAKLSRLTILKLDQNRLQRLNDTLGNCENMQELILTENFLSELPASIGQMTKLNNLNVDRNALEYLPLEIGQCANLGVLSLRDNKLKKLPPELGNCTVLHVLDVSGNQLLYLPYSLVNLQLKAVWLSENQSQPLLTFQPDTDAETGEQVLSCYLLPQQEYQPITPARDLESDSEPFEEREPSRTVVKFSEEATQEKETPFVRQNTPHPKDLKAKAQKLKVERSRNEEHANLVTLPEENGTKLAETPTETRTIANNHQQQPHPVQQPIVGVNSKQPVVVGVVTPTTTTVAPTGVQGGSEGASSTANNVKAATAAVVAELAATVGGSDEVQDDDEQEDEFESDRRVGFQVEGEDDDFYKRPPKLHRRDTPHHLKNKRVQHLTDKQASEILANALASQERNDTTPQHSLSGKVTSPIEEEEQLEVEQEQQQQQQQHPFDSSLSPISAGKTAEASTDPDNLDGVTELRLEQYEIHIERTAAGLGLSIAGGKGSTPFKGDDDGIFISRVTEAGPADLAGLKVGDKVIKVNGIVVVDADHYQAVQVLKACGAVLVLVVQREVTRLIGHPVFSEDGSVSQISVETRPLVADAPPAASISHERYIPAPIEIVPQQQHLQQQQQQPIQQVAPTHSYSGNVFATPTAAQTVQPAVSAAPNGLLLNGREAPLSYIQLHTTLIRDQIGQGLGFSIAGGKGSPPFKDDCDGIFISRITEGGLAYRDGKIMVGDRVMAINGNDMTEAHHDAAVACLTEPQRFVRLVLQREYRGPLEPPTSPRSPAVLNSLSPSGYLANRPANFSRSVVEVEQPYKYNTLATTTPTPKPTVPASISNNNNTLPSSKTNGFATAAAATIDSSTGQPVPAPRRTNSVPMGDGDIGAGSTTSGDSGEAQPSSLRPLTSDDFQAMIPAHFLSGGSQHQVHVARPNEVGVSAVTVNVNKPQPDLPMFPAAPTELGRVTETITKSTFTETVMTRITDNQLAEPLISEEVVLPKNQGSLGFSIIGGTDHSCVPFGTREPGIFISHIVPGGIASKCGKLRMGDRILKVNEADVSKATHQDAVLELLKPGDEIKLTIQHDPLPPGFQEVLLSKAEGERLGMHIKGGLNGQRGNPADPSDEGVFVSKINSVGAARRDGRLKVGMRLLEVNGHSLLGASHQDAVNVLRNAGNEIQLVVCKGYDKSNLIHSIGQAGGMSTGFNSSASCSGGSRQGSRASETGSELSQSQSVSSLDHEEDERLRQDFDVFASQKPDAQQPTGPSVLAAAAAMVHGASSPTPPAATSNITPLPTAAAVASADLTAPDTPATQTVALIHAEQQAHQQQQQTQLAPLGQEKSTQEKVLEIVRAADAFTTVPPKSPSEHHEQDKIQKTTTVVISKHTLDTNPTTPTTPAAPLSIAGAESANSAGAPSPAVPASTPGSAPVLPAVAVQTQTQTTSTEKDEEEESQLQSTPASRDGAEEQQEEVRAKPTPTKVPKSVSDKKRFFESAMEDQHKPTQKTDKVFSFLSKDEVEKLRQEEERKIATLRRDKNSRLLDAANDNIDKDAAQQRTKSNSNSSSGDDNDDSDQEEGIARGDSVDNAALGHFDDAEDMRNPLDEIEAVFRS.

LRR repeat units follow at residues 38–59 (TLEE…FFRL), 61–82 (RLRK…IQNF), 84–105 (NLVE…IKHL), 107–128 (SLQV…FSQL), 130–152 (NLTV…GSLT), 153–174 (QLES…ISQL), 176–197 (KLKR…LGYL), 199–220 (GLHE…LGLL), 222–243 (KLTY…ISGL), 245–267 (SLTD…AKLS), 268–289 (RLTI…LGNC), 291–312 (NMQE…IGQM), 314–335 (KLNN…IGQC), 337–358 (NLGV…LGNC), 360–382 (VLHV…VNLQ), and 383–403 (LKAV…QPDT). 3 disordered regions span residues 427-474 (PARD…KDLK), 584-641 (VGGS…VQHL), and 656-719 (SQER…PDNL). Phosphoserine is present on residues S433 and S435. Basic and acidic residues predominate over residues 438–461 (FEEREPSRTVVKFSEEATQEKETP). Positions 471 to 492 (KDLKAKAQKLKVERSRNEEHAN) form a coiled coil. Acidic residues predominate over residues 589–601 (EVQDDDEQEDEFE). A compositionally biased stretch (basic residues) spans 620–639 (RPPKLHRRDTPHHLKNKRVQ). A compositionally biased stretch (polar residues) spans 656–672 (SQERNDTTPQHSLSGKV). A compositionally biased stretch (acidic residues) spans 676–686 (IEEEEQLEVEQ). The stretch at 677–693 (EEEEQLEVEQEQQQQQQ) forms a coiled coil. Phosphoserine occurs at positions 700, 702, and 705. The PDZ 1 domain occupies 731–818 (EIHIERTAAG…VLVLVVQREV (88 aa)). A phosphoserine mark is found at S834 and S837. The 91-residue stretch at 929–1019 (HTTLIRDQIG…FVRLVLQREY (91 aa)) folds into the PDZ 2 domain. S1031 and S1041 each carry phosphoserine. Residues 1067 to 1150 (LATTTPTPKP…EAQPSSLRPL (84 aa)) form a disordered region. 2 stretches are compositionally biased toward polar residues: residues 1080–1097 (ASIS…TNGF) and 1132–1149 (GSTT…SLRP). 2 consecutive PDZ domains span residues 1239 to 1329 (EVVL…QHDP) and 1336 to 1428 (EVLL…CKGY). A compositionally biased stretch (polar residues) spans 1448-1467 (NSSASCSGGSRQGSRASETG). The interval 1448–1485 (NSSASCSGGSRQGSRASETGSELSQSQSVSSLDHEEDE) is disordered. Residues 1468 to 1478 (SELSQSQSVSS) are compositionally biased toward low complexity. S1475, S1477, and S1478 each carry phosphoserine. The residue at position 1599 (T1599) is a Phosphothreonine. Low complexity predominate over residues 1647–1669 (AESANSAGAPSPAVPASTPGSAP). 2 disordered regions span residues 1647-1751 (AESA…KVFS) and 1772-1851 (LRRD…VFRS). Residues 1725 to 1751 (VSDKKRFFESAMEDQHKPTQKTDKVFS) show a composition bias toward basic and acidic residues. Residues 1753–1790 (LSKDEVEKLRQEEERKIATLRRDKNSRLLDAANDNIDK) adopt a coiled-coil conformation. The span at 1807–1816 (DDNDDSDQEE) shows a compositional bias: acidic residues. Positions 1831 to 1851 (HFDDAEDMRNPLDEIEAVFRS) are enriched in basic and acidic residues.

Belongs to the LAP (LRR and PDZ) protein family. As to expression, during germ band extension, expression of isoform A occurs predominantly in neuroblasts derived from the neuro-ectoderm and later is restricted to CNS neurons and pole cells. Isoform C is strongly expressed in PNS and a subset of CNS neurons. In the adult, expressed in third antennal segment and maxillary palps, major olfactory organs and in Johnstons organ in the second antennal segment. Expression is also observed in cortical regions of the brain. Isoforms expressed in epithelia are coexpressed with dlg1 throughout development.

It localises to the cytoplasm. The protein resides in the apicolateral cell membrane. The protein localises to the cell junction. Its subcellular location is the septate junction. Functionally, required for polarization of the embryonic, imaginal disk and follicular epithelia. Specifically restricts apical membrane determinants to the apical cell surface; acts to exclude crb from the basolateral domain and define adherens junction position. Regulates cellular growth and differentiation; acts as a tumor suppressor. Essential for odor guided behavior. In Drosophila melanogaster (Fruit fly), this protein is Protein lap4.